A 108-amino-acid chain; its full sequence is Tubulin-specific chaperone A (108 aa).

Residue A2 is modified to N-acetylalanine.

Belongs to the TBCA family. In terms of assembly, supercomplex made of cofactors A to E. Cofactors A and D function by capturing and stabilizing tubulin in a quasi-native conformation. Cofactor E binds to the cofactor D-tubulin complex; interaction with cofactor C then causes the release of tubulin polypeptides that are committed to the native state.

The protein localises to the cytoplasm. The protein resides in the cytoskeleton. Tubulin-folding protein; involved in the early step of the tubulin folding pathway. The protein is Tubulin-specific chaperone A (TBCA) of Gallus gallus (Chicken).